Here is a 180-residue protein sequence, read N- to C-terminus: ATP-dependent protease subunit HslV (180 aa).

Residue Thr-7 is part of the active site. Gly-165, Cys-168, and Thr-171 together coordinate Na(+).

This sequence belongs to the peptidase T1B family. HslV subfamily. In terms of assembly, a double ring-shaped homohexamer of HslV is capped on each side by a ring-shaped HslU homohexamer. The assembly of the HslU/HslV complex is dependent on binding of ATP.

The protein localises to the cytoplasm. The catalysed reaction is ATP-dependent cleavage of peptide bonds with broad specificity.. Allosterically activated by HslU binding. Its function is as follows. Protease subunit of a proteasome-like degradation complex believed to be a general protein degrading machinery. The chain is ATP-dependent protease subunit HslV from Bacillus cereus (strain ATCC 10987 / NRS 248).